A 531-amino-acid chain; its full sequence is tRNA-2-methylthio-N(6)-dimethylallyladenosine synthase (531 aa).

The interval M1–L26 is disordered. The segment covering T15–L26 has biased composition (basic and acidic residues). One can recognise an MTTase N-terminal domain in the interval R80–M198. Residues C89, C125, C159, C235, C239, and C242 each contribute to the [4Fe-4S] cluster site. The Radical SAM core domain occupies R221–K451. One can recognise a TRAM domain in the interval K454 to N517.

The protein belongs to the methylthiotransferase family. MiaB subfamily. As to quaternary structure, monomer. [4Fe-4S] cluster serves as cofactor.

It is found in the cytoplasm. The catalysed reaction is N(6)-dimethylallyladenosine(37) in tRNA + (sulfur carrier)-SH + AH2 + 2 S-adenosyl-L-methionine = 2-methylsulfanyl-N(6)-dimethylallyladenosine(37) in tRNA + (sulfur carrier)-H + 5'-deoxyadenosine + L-methionine + A + S-adenosyl-L-homocysteine + 2 H(+). Catalyzes the methylthiolation of N6-(dimethylallyl)adenosine (i(6)A), leading to the formation of 2-methylthio-N6-(dimethylallyl)adenosine (ms(2)i(6)A) at position 37 in tRNAs that read codons beginning with uridine. The sequence is that of tRNA-2-methylthio-N(6)-dimethylallyladenosine synthase from Geobacillus kaustophilus (strain HTA426).